The chain runs to 408 residues: Histidine--tRNA ligase (408 aa).

This sequence belongs to the class-II aminoacyl-tRNA synthetase family. In terms of assembly, homodimer.

It localises to the cytoplasm. The catalysed reaction is tRNA(His) + L-histidine + ATP = L-histidyl-tRNA(His) + AMP + diphosphate + H(+). In Campylobacter lari (strain RM2100 / D67 / ATCC BAA-1060), this protein is Histidine--tRNA ligase.